We begin with the raw amino-acid sequence, 1347 residues long: BTB/POZ domain-containing protein 1 (1347 aa).

ANK repeat units lie at residues 51–81 (YGRTVLHIAVSENKNSFVRSLLQHKGIDVFV) and 86–115 (SGYTALHRAIYVGNLEAASLLLSKDPSFRS). RCC1 repeat units follow at residues 148–198 (GNEL…DKIL), 215–264 (SQNV…ALTK), 265–322 (FGSI…AWTD), and 324–372 (DIYS…CLLQ). BTB domains lie at 619 to 698 (SDVT…LSPW) and 758 to 829 (MDTV…VELF). Disordered stretches follow at residues 1006 to 1029 (SSNQSDSLNKEDAEEKSPKPNVVN), 1104 to 1139 (EKADASTTTVLSDSRFMKAPTKKSQREKKKELSKQV), 1193 to 1237 (EGSS…PLSI), and 1286 to 1347 (GILK…RAVK). The span at 1013–1023 (LNKEDAEEKSP) shows a compositional bias: basic and acidic residues. 2 stretches are compositionally biased toward polar residues: residues 1208-1237 (SNGSPTSWNLLTKPSPRSASLPKNSQPLSI) and 1297-1306 (NRKQGQASKQ). Over residues 1336 to 1347 (TTHKKGKARAVK) the composition is skewed to basic residues.

Interacts with cul3.

It participates in protein modification; protein ubiquitination. In terms of biological role, probable substrate-specific adapter of an E3 ubiquitin-protein ligase complex which mediates the ubiquitination and subsequent proteasomal degradation of target proteins. The polypeptide is BTB/POZ domain-containing protein 1 (btb1) (Schizosaccharomyces pombe (strain 972 / ATCC 24843) (Fission yeast)).